Here is a 134-residue protein sequence, read N- to C-terminus: MRQTVKEIVAIGIGGAIGTSFRFLLNTWTLTTGYPYGTLIENIVGSFLLGFLTSWFLVIVPKEWLKKGLGVGLCGGFTTMSTLAADSVLLYSHHPFSSLIYVAASLFGGIGFALLGYLLASKIATRRKREVAGS.

The next 4 membrane-spanning stretches (helical) occupy residues 8–28 (IVAI…LNTW), 40–60 (IENI…LVIV), 69–89 (LGVG…DSVL), and 99–119 (LIYV…GYLL). Na(+) contacts are provided by Gly-75 and Thr-78.

It belongs to the fluoride channel Fluc/FEX (TC 1.A.43) family.

Its subcellular location is the cell membrane. The catalysed reaction is fluoride(in) = fluoride(out). Na(+) is not transported, but it plays an essential structural role and its presence is essential for fluoride channel function. Its function is as follows. Fluoride-specific ion channel. Important for reducing fluoride concentration in the cell, thus reducing its toxicity. This is Fluoride-specific ion channel FluC 2 from Halalkalibacterium halodurans (strain ATCC BAA-125 / DSM 18197 / FERM 7344 / JCM 9153 / C-125) (Bacillus halodurans).